Consider the following 98-residue polypeptide: Integration host factor subunit beta (98 aa).

It belongs to the bacterial histone-like protein family. In terms of assembly, heterodimer of an alpha and a beta chain.

Its function is as follows. This protein is one of the two subunits of integration host factor, a specific DNA-binding protein that functions in genetic recombination as well as in transcriptional and translational control. The chain is Integration host factor subunit beta from Pseudomonas fluorescens (strain SBW25).